We begin with the raw amino-acid sequence, 1369 residues long: MutS protein homolog 5 (1369 aa).

Residues 138–190 form a disordered region; that stretch reads IYEDGTTEEGTSEDTVPTWDSSLAYSTDETTAEKEEKEEDEDDDDEGLPAKLN. Residues 173 to 184 are compositionally biased toward acidic residues; sequence EKEEDEDDDDEG. Position 639–646 (639–646) interacts with ATP; that stretch reads GPNACGKS. 4 disordered regions span residues 880-915, 935-1135, 1153-1182, and 1248-1278; these read SMRN…SVLS, KKKK…RSSN, LKSQ…HSQN, and NFIF…SSIS. Over residues 884-894 the composition is skewed to basic and acidic residues; that stretch reads VSEEIEKERSE. 2 stretches are compositionally biased toward polar residues: residues 895–915 and 941–950; these read ASTP…SVLS and TGSSMESSMS. Acidic residues predominate over residues 954–967; that stretch reads FQEEDEGTEGEEDQ. Positions 991–1003 are enriched in polar residues; it reads QSINSRHSFSTRT. Positions 1024 to 1037 are enriched in low complexity; sequence STSTSSPGPSASKS. The segment covering 1049-1065 has biased composition (polar residues); the sequence is VKESQVLETPKQLSISS. Over residues 1073–1084 the composition is skewed to basic and acidic residues; sequence SSEKDVISRVSE. Polar residues-rich tracts occupy residues 1111–1124 and 1153–1167; these read KNRS…QSAR and LKSQ…TPRS. The span at 1254-1263 shows a compositional bias: basic and acidic residues; sequence PEPRSSEKQR.

Belongs to the DNA mismatch repair MutS family. Heterooligomer of him-14 and msh-5. Interacts with the brc-1-brd-1 heterodimer. In terms of tissue distribution, expressed in the germline.

It is found in the chromosome. Crucial component in meiotic recombination, functioning at some point after the initiation step of recombination. Plays a role in promoting the crossover outcome of meiotic recombination events. Required for formation of normal meiotic crossover, and crossover and chiasmata generated by artificially made DNA breaks. Together with him-14 and zhp-3 plays a role in the activation of DNA damage-dependent apoptosis at the DNA damage checkpoint in pachytene cells. In Caenorhabditis elegans, this protein is MutS protein homolog 5.